Consider the following 420-residue polypeptide: Trophoblast glycoprotein (420 aa).

Residues 1 to 34 (MPGGCSRGPAAGDGRLRLARLALVLLGWVSSSSS) form the signal peptide. Residues 35–355 (TSSASSSSSS…PILPPSLQTS (321 aa)) lie on the Extracellular side of the membrane. Residues 53–91 (SAQPPLPDQCPALCECSEAARTVKCVNRNLTEVPTDLPL) form the LRRNT domain. Disulfide bonds link C62/C68 and C66/C77. N81 carries an N-linked (GlcNAc...) asparagine glycan. LRR repeat units lie at residues 92 to 113 (YVRN…AFAR), 116 to 139 (PLAE…GAFE), 141 to 163 (LPSL…FAFS), 172 to 204 (PSPL…AALV), 209 to 232 (LQGL…VLAQ), 233 to 255 (LPSL…VSFR), and 256 to 275 (NLTH…VLHN). N124 is a glycosylation site (N-linked (GlcNAc...) asparagine). N-linked (GlcNAc...) asparagine glycosylation occurs at N275. The LRRCT domain maps to 283 to 346 (GLPHVRVFLD…LNSADLDCDP (64 aa)). Disulfide bonds link C298/C323 and C300/C344. Residues 356 to 376 (YVFLGIVLALIGAIFLLVLYL) traverse the membrane as a helical segment. At 377–420 (NRKGIKKWMHNIRDACRDHMEGYHYRYEINADPRLTNLSSNSDV) the chain is on the cytoplasmic side. The residue at position 418 (S418) is a Phosphoserine.

In terms of processing, highly glycosylated.

The protein resides in the cell membrane. Functionally, may function as an inhibitor of Wnt/beta-catenin signaling by indirectly interacting with LRP6 and blocking Wnt3a-dependent LRP6 internalization. The sequence is that of Trophoblast glycoprotein (TPBG) from Macaca fascicularis (Crab-eating macaque).